The primary structure comprises 149 residues: Large ribosomal subunit protein bL9 (149 aa).

It belongs to the bacterial ribosomal protein bL9 family.

Its function is as follows. Binds to the 23S rRNA. The sequence is that of Large ribosomal subunit protein bL9 from Synechococcus sp. (strain JA-2-3B'a(2-13)) (Cyanobacteria bacterium Yellowstone B-Prime).